The chain runs to 227 residues: Phosphoribosylformylglycinamidine synthase subunit PurQ (227 aa).

In terms of domain architecture, Glutamine amidotransferase type-1 spans 2–226 (KFAVIQFPGS…VKAWKEEQVN (225 aa)). Catalysis depends on Cys-86, which acts as the Nucleophile. Active-site residues include His-195 and Glu-197.

In terms of assembly, part of the FGAM synthase complex composed of 1 PurL, 1 PurQ and 2 PurS subunits.

Its subcellular location is the cytoplasm. It carries out the reaction N(2)-formyl-N(1)-(5-phospho-beta-D-ribosyl)glycinamide + L-glutamine + ATP + H2O = 2-formamido-N(1)-(5-O-phospho-beta-D-ribosyl)acetamidine + L-glutamate + ADP + phosphate + H(+). The catalysed reaction is L-glutamine + H2O = L-glutamate + NH4(+). It functions in the pathway purine metabolism; IMP biosynthesis via de novo pathway; 5-amino-1-(5-phospho-D-ribosyl)imidazole from N(2)-formyl-N(1)-(5-phospho-D-ribosyl)glycinamide: step 1/2. Functionally, part of the phosphoribosylformylglycinamidine synthase complex involved in the purines biosynthetic pathway. Catalyzes the ATP-dependent conversion of formylglycinamide ribonucleotide (FGAR) and glutamine to yield formylglycinamidine ribonucleotide (FGAM) and glutamate. The FGAM synthase complex is composed of three subunits. PurQ produces an ammonia molecule by converting glutamine to glutamate. PurL transfers the ammonia molecule to FGAR to form FGAM in an ATP-dependent manner. PurS interacts with PurQ and PurL and is thought to assist in the transfer of the ammonia molecule from PurQ to PurL. The sequence is that of Phosphoribosylformylglycinamidine synthase subunit PurQ from Listeria monocytogenes serovar 1/2a (strain ATCC BAA-679 / EGD-e).